The chain runs to 263 residues: Endonuclease 8 (263 aa).

Pro2 acts as the Schiff-base intermediate with DNA in catalysis. Glu3 (proton donor) is an active-site residue. The active-site Proton donor; for beta-elimination activity is Lys53. Residues Gln70, Arg125, and Asn169 each contribute to the DNA site. The FPG-type zinc-finger motif lies at 229–263 (KVFHRDGEACERCGGIIEKTTLSSRPFYWCPHCQK). The active-site Proton donor; for delta-elimination activity is Arg253.

Belongs to the FPG family. Zn(2+) is required as a cofactor.

It carries out the reaction 2'-deoxyribonucleotide-(2'-deoxyribose 5'-phosphate)-2'-deoxyribonucleotide-DNA = a 3'-end 2'-deoxyribonucleotide-(2,3-dehydro-2,3-deoxyribose 5'-phosphate)-DNA + a 5'-end 5'-phospho-2'-deoxyribonucleoside-DNA + H(+). Functionally, involved in base excision repair of DNA damaged by oxidation or by mutagenic agents. Acts as a DNA glycosylase that recognizes and removes damaged bases. Has a preference for oxidized pyrimidines, such as thymine glycol, 5,6-dihydrouracil and 5,6-dihydrothymine. Has AP (apurinic/apyrimidinic) lyase activity and introduces nicks in the DNA strand. Cleaves the DNA backbone by beta-delta elimination to generate a single-strand break at the site of the removed base with both 3'- and 5'-phosphates. The sequence is that of Endonuclease 8 from Salmonella heidelberg (strain SL476).